A 235-amino-acid polypeptide reads, in one-letter code: Eukaryotic translation initiation factor 4E-1 (235 aa).

Positions 1–16 (MAVEDTPKSVVTEEAK) are enriched in basic and acidic residues. The interval 1–59 (MAVEDTPKSVVTEEAKPNSIENPIDRYHEEGDDAEEGEIAGGEGDGNVDESSKSGVPES) is disordered. 2 EIF4G-binding regions span residues 60–63 (HPLE) and 70–106 (FDNP…NNMK). Residues 78-83 (KQTSWG), K110, and 128-129 (WE) contribute to the mRNA site. Cysteines 133 and 171 form a disulfide. Residues 154 to 163 (YTLLALIGEQ) form an EIF4G-binding region. MRNA contacts are provided by residues 178–183 (RGKQER) and 223–227 (KKLDR).

Belongs to the eukaryotic initiation factor 4E family. EIF4F is a multi-subunit complex, the composition of which varies with external and internal environmental conditions. It is composed of at least EIF4A, EIF4E and EIF4G. EIF4E is also known to interact with other partners. In higher plants two isoforms of EIF4F have been identified, named isoform EIF4F and isoform EIF(iso)4F. Isoform EIF4F has subunits p220 and p26, whereas isoform EIF(iso)4F has subunits p82 and p28. Interacts directly with EXA1. As to quaternary structure, (Microbial infection) Interacts with viral genome-linked protein (VPg); this interaction is possible in susceptible hosts but impaired in resistant plants. In terms of processing, according to the redox status, the Cys-133-Cys-171 disulfide bridge may have a role in regulating protein function by affecting its ability to bind capped mRNA. In terms of tissue distribution, expressed in all tissues except in the cells of the specialization zone of the roots.

The protein resides in the nucleus. The protein localises to the cytoplasm. In terms of biological role, component of the protein complex eIF4F, which is involved in the recognition of the mRNA cap, ATP-dependent unwinding of 5'-terminal secondary structure and recruitment of mRNA to the ribosome. Recognizes and binds the 7-methylguanosine-containing mRNA cap during an early step in the initiation of protein synthesis and facilitates ribosome binding by inducing the unwinding of the mRNAs secondary structures. Key component of recessive resistance to potyviruses. (Microbial infection) Susceptibility host factor required for viral infection by recruiting viral RNAs to the host ribosomal complex via an interaction with viral genome-linked protein (VPg). The polypeptide is Eukaryotic translation initiation factor 4E-1 (Arabidopsis thaliana (Mouse-ear cress)).